A 218-amino-acid chain; its full sequence is uncharacterized protein (218 aa).

The next 4 helical transmembrane spans lie at I10–I30, I55–I75, V147–A167, and F175–R195.

Belongs to the DedA family.

The protein localises to the cell membrane. This is an uncharacterized protein from Mycobacterium tuberculosis (strain CDC 1551 / Oshkosh).